The following is a 439-amino-acid chain: O-fucosyltransferase 13 (439 aa).

The chain crosses the membrane as a helical; Signal-anchor for type II membrane protein span at residues 8-28; it reads PLFVFVLTFSLLLVVILLSPS. Residues asparagine 104 and asparagine 119 are each glycosylated (N-linked (GlcNAc...) asparagine). Substrate is bound at residue 238–240; it reads HLR. An N-linked (GlcNAc...) asparagine glycan is attached at asparagine 293.

The protein belongs to the glycosyltransferase GT106 family.

It localises to the membrane. Its pathway is glycan metabolism. The sequence is that of O-fucosyltransferase 13 from Arabidopsis thaliana (Mouse-ear cress).